The following is a 506-amino-acid chain: Tubby protein homolog (506 aa).

Positions glutamine 36–valine 244 are disordered. 2 stretches are compositionally biased toward low complexity: residues leucine 70 to glutamate 87 and proline 101 to alanine 116. Residues phenylalanine 196–asparagine 206 are compositionally biased toward acidic residues. Low complexity-rich tracts occupy residues serine 207 to serine 221 and glutamate 230 to proline 243.

Belongs to the TUB family. In terms of assembly, interacts with GNAQ. Interacts with TULP1.

It is found in the cytoplasm. It localises to the nucleus. Its subcellular location is the secreted. The protein localises to the cell membrane. Its function is as follows. Functions in signal transduction from heterotrimeric G protein-coupled receptors. Binds to membranes containing phosphatidylinositol 4,5-bisphosphate. Can bind DNA (in vitro). May contribute to the regulation of transcription in the nucleus. Could be involved in the hypothalamic regulation of body weight. Contribute to stimulation of phagocytosis of apoptotic retinal pigment epithelium (RPE) cells and macrophages. The sequence is that of Tubby protein homolog (TUB) from Homo sapiens (Human).